Reading from the N-terminus, the 261-residue chain is General secretion pathway protein N (261 aa).

At 1-10 (MRLEMIGLRT) the chain is on the cytoplasmic side. The chain crosses the membrane as a helical span at residues 11-31 (WLLATVVGWALLVCVLAVAGL). At 32-261 (GKRVELLPDD…QGGSTPGQTQ (230 aa)) the chain is on the periplasmic side. Residues 158–261 (VFNGQGGQPP…QGGSTPGQTQ (104 aa)) form a disordered region. Residues 179-200 (AVPPLPPNVPPAPATPAPPPAE) show a composition bias toward pro residues. A compositionally biased stretch (low complexity) spans 201-211 (VPQQQPGGQAP). Residues 227–244 (RPSDEQMRAIRERIEARR) are compositionally biased toward basic and acidic residues.

Binds to XpsD.

It is found in the cell inner membrane. Its function is as follows. Involved in a general secretion pathway (GSP) for the export of proteins. The chain is General secretion pathway protein N (xpsN) from Xanthomonas campestris pv. campestris (strain ATCC 33913 / DSM 3586 / NCPPB 528 / LMG 568 / P 25).